The primary structure comprises 561 residues: Reductase FVEG_12641 (561 aa).

Residues 1–26 (MGVQSTANLPKETVSHLDTAPTPKPG) form a disordered region. Positions 52–189 (QQHDGPVFCS…ICKGDTISLL (138 aa)) constitute an MOSC domain. The 106-residue stretch at 237–342 (SAPKTYTLVD…PGSNPGAMEN (106 aa)) folds into the FAD-binding FR-type domain. FMN contacts are provided by residues 288-289 (FE), 305-307 (GVS), 313-316 (RGGS), and threonine 362. Residues 474–561 (FEVEVDEPDS…GIGRLRIEID (88 aa)) enclose the 2Fe-2S ferredoxin-type domain. Residue cysteine 512 participates in [2Fe-2S] cluster binding. Residue serine 514 participates in FMN binding. [2Fe-2S] cluster contacts are provided by cysteine 517, cysteine 520, and cysteine 548.

Belongs to the PDR/VanB family. Monomer. FMN is required as a cofactor.

Reductase; part of the Fusarium detoxification of benzoxazolinone cluster 2 (FDB2) involved in the degradation of benzoxazolinones produced by the host plant. Maize, wheat, and rye produce the 2 benzoxazinone phytoanticipins 2,4-dihy-droxy-7-methoxy-1,4-benzoxazin-3-one (DIMBOA) and 2,4-dihydroxy-1,4-benzoxazin-3-one (DIBOA) that, due to their inherent instability once released, spontaneously degrade to the more stable corresponding benzoxazolinones, 6-methoxy-2-benzoxazolinone (MBOA) and 2-benzoxazolinone (BOA), respectively. The first step in the detoxification of benzoxazolinones involves the hydrolysis of the cyclic ester bond of benzoxazolinones by the FDB1 cluster gamma-lactamase MBL1 to aminophenols. MBL1 is able to convert BOA into 2-aminophenol (2-AP), as well as MBOA into 5-methoxy-2-aminophenol (2-AMP). The FDB2 cluster N-malonyltransferase FDB2/NAT1 then metabolizes aminophenols via N-malonylation to non-toxic malonamic acids. FDB2/NAT1 converts 2-AP into N-(2-hydroxyphenyl) malonamic acid (HPMA) and 2-AMP into N-(2-hydroxy-4-methoxyphenyl) malonamic acid (HMPMA). The duplicated dienlactone hydrolases DLH1 and DLH2 may provide redundant function for hydrolyzing the lactone moiety in the BOA molecule. The roles of the amidases an other enzymes encoded by the 2 FDB clusters have not been identified so far. The polypeptide is Reductase FVEG_12641 (Gibberella moniliformis (strain M3125 / FGSC 7600) (Maize ear and stalk rot fungus)).